Reading from the N-terminus, the 902-residue chain is Alanine--tRNA ligase (902 aa).

Zn(2+) contacts are provided by His567, His571, Cys671, and His675.

This sequence belongs to the class-II aminoacyl-tRNA synthetase family. It depends on Zn(2+) as a cofactor.

Its subcellular location is the cytoplasm. The catalysed reaction is tRNA(Ala) + L-alanine + ATP = L-alanyl-tRNA(Ala) + AMP + diphosphate. Its function is as follows. Catalyzes the attachment of alanine to tRNA(Ala) in a two-step reaction: alanine is first activated by ATP to form Ala-AMP and then transferred to the acceptor end of tRNA(Ala). Also edits incorrectly charged Ser-tRNA(Ala) and Gly-tRNA(Ala) via its editing domain. The chain is Alanine--tRNA ligase from Mycoplasmoides gallisepticum (strain R(low / passage 15 / clone 2)) (Mycoplasma gallisepticum).